The sequence spans 199 residues: Golgi to ER traffic protein 1 (199 aa).

Residues 1–11 (MLLPDLHPYTI) lie on the Lumenal side of the membrane. Residues 12–31 (LLSIFLVLVAKQLVATIGKS) traverse the membrane as a helical segment. At 32–115 (TIQEFVWLVY…SIDKASNALI (84 aa)) the chain is on the cytoplasmic side. Positions 76–116 (YAKWTKLNRQADKLSAELQKLNQEIQQQKSSIDKASNALIL) form a coiled coil. The chain crosses the membrane as a helical span at residues 116–136 (LVLTTLPIWIARVFYRKTHLF). Topologically, residues 137 to 160 (YIRQGIFPKYVEWVLALPFLPNGA) are lumenal. The helical transmembrane segment at 161–177 (VGLTIWMFAVNSVVSNF) threads the bilayer. At 178–199 (SFLVSFPFAKRVSKPVRDTKVE) the chain is on the cytoplasmic side.

This sequence belongs to the WRB/GET1 family. In terms of assembly, component of the Golgi to ER traffic (GET) complex, which is composed of GET1, GET2 and GET3. Within the complex, GET1 and GET2 form a heterotetramer which is stabilized by phosphatidylinositol binding and which binds to the GET3 homodimer.

The protein localises to the endoplasmic reticulum membrane. It localises to the golgi apparatus membrane. In terms of biological role, required for the post-translational delivery of tail-anchored (TA) proteins to the endoplasmic reticulum. Together with GET2, acts as a membrane receptor for soluble GET3, which recognizes and selectively binds the transmembrane domain of TA proteins in the cytosol. The GET complex cooperates with the HDEL receptor ERD2 to mediate the ATP-dependent retrieval of resident ER proteins that contain a C-terminal H-D-E-L retention signal from the Golgi to the ER. This chain is Golgi to ER traffic protein 1, found in Candida albicans (strain SC5314 / ATCC MYA-2876) (Yeast).